Here is a 450-residue protein sequence, read N- to C-terminus: Na(+)/H(+) antiporter NhaA 1 (450 aa).

The next 11 helical transmembrane spans lie at 35–55, 79–99, 117–137, 143–163, 173–193, 198–218, 224–244, 320–340, 356–376, 392–412, and 423–443; these read SSLF…SDYA, LKHI…GLEI, LIIC…GFNW, IGWG…LTMV, AFIV…IAIF, ISLM…VANY, PLFY…SGVH, LPVV…VVIN, IISG…WFAL, VIGA…IATL, and VAKT…LLYL.

The protein belongs to the NhaA Na(+)/H(+) (TC 2.A.33) antiporter family.

The protein localises to the cell inner membrane. It carries out the reaction Na(+)(in) + 2 H(+)(out) = Na(+)(out) + 2 H(+)(in). In terms of biological role, na(+)/H(+) antiporter that extrudes sodium in exchange for external protons. In Shewanella denitrificans (strain OS217 / ATCC BAA-1090 / DSM 15013), this protein is Na(+)/H(+) antiporter NhaA 1.